The sequence spans 307 residues: 4-hydroxy-3-methylbut-2-enyl diphosphate reductase (307 aa).

[4Fe-4S] cluster is bound at residue cysteine 13. Residues histidine 42 and histidine 75 each contribute to the (2E)-4-hydroxy-3-methylbut-2-enyl diphosphate site. Residues histidine 42 and histidine 75 each coordinate dimethylallyl diphosphate. Residues histidine 42 and histidine 75 each contribute to the isopentenyl diphosphate site. [4Fe-4S] cluster is bound at residue cysteine 97. Histidine 125 provides a ligand contact to (2E)-4-hydroxy-3-methylbut-2-enyl diphosphate. Position 125 (histidine 125) interacts with dimethylallyl diphosphate. Histidine 125 provides a ligand contact to isopentenyl diphosphate. The active-site Proton donor is glutamate 127. (2E)-4-hydroxy-3-methylbut-2-enyl diphosphate is bound at residue threonine 165. Cysteine 195 contributes to the [4Fe-4S] cluster binding site. 4 residues coordinate (2E)-4-hydroxy-3-methylbut-2-enyl diphosphate: serine 223, serine 224, asparagine 225, and serine 267. The dimethylallyl diphosphate site is built by serine 223, serine 224, asparagine 225, and serine 267. 4 residues coordinate isopentenyl diphosphate: serine 223, serine 224, asparagine 225, and serine 267.

It belongs to the IspH family. [4Fe-4S] cluster serves as cofactor.

It carries out the reaction isopentenyl diphosphate + 2 oxidized [2Fe-2S]-[ferredoxin] + H2O = (2E)-4-hydroxy-3-methylbut-2-enyl diphosphate + 2 reduced [2Fe-2S]-[ferredoxin] + 2 H(+). The catalysed reaction is dimethylallyl diphosphate + 2 oxidized [2Fe-2S]-[ferredoxin] + H2O = (2E)-4-hydroxy-3-methylbut-2-enyl diphosphate + 2 reduced [2Fe-2S]-[ferredoxin] + 2 H(+). It participates in isoprenoid biosynthesis; dimethylallyl diphosphate biosynthesis; dimethylallyl diphosphate from (2E)-4-hydroxy-3-methylbutenyl diphosphate: step 1/1. Its pathway is isoprenoid biosynthesis; isopentenyl diphosphate biosynthesis via DXP pathway; isopentenyl diphosphate from 1-deoxy-D-xylulose 5-phosphate: step 6/6. Functionally, catalyzes the conversion of 1-hydroxy-2-methyl-2-(E)-butenyl 4-diphosphate (HMBPP) into a mixture of isopentenyl diphosphate (IPP) and dimethylallyl diphosphate (DMAPP). Acts in the terminal step of the DOXP/MEP pathway for isoprenoid precursor biosynthesis. This is 4-hydroxy-3-methylbut-2-enyl diphosphate reductase from Chlamydia trachomatis serovar A (strain ATCC VR-571B / DSM 19440 / HAR-13).